The chain runs to 531 residues: Bifunctional aspartate aminotransferase and L-aspartate beta-decarboxylase (531 aa).

Glycine 114 and asparagine 255 together coordinate L-aspartate. An N6-(pyridoxal phosphate)lysine modification is found at lysine 314. Position 496 (arginine 496) interacts with L-aspartate.

It belongs to the class-I pyridoxal-phosphate-dependent aminotransferase family. In terms of assembly, homododecamer. It depends on pyridoxal 5'-phosphate as a cofactor.

It carries out the reaction L-aspartate + H(+) = L-alanine + CO2. The catalysed reaction is L-aspartate + 2-oxoglutarate = oxaloacetate + L-glutamate. Inhibited by 10 mM Co(2+), Mn(2+) and Ni(2+), and by 1 mM Cu(2+) and Hg(2+). Bifunctional enzyme that has both L-aspartate decarboxylase and transaminase activity. Has high activity with L-aspartate, and much lower activity with D-aspartate, L-lysine and L-glutamine. In Pseudomonas sp, this protein is Bifunctional aspartate aminotransferase and L-aspartate beta-decarboxylase.